The sequence spans 119 residues: Non-specific lipid-transfer protein 3 (119 aa).

An N-terminal signal peptide occupies residues 1-24 (MARSMKLACVVLAMCMLVAPMAEA). 4 cysteine pairs are disulfide-bonded: Cys28–Cys77, Cys38–Cys54, Cys55–Cys100, and Cys75–Cys114.

The protein belongs to the plant LTP family. In terms of tissue distribution, expressed in roots, stem, leaves and tendrils of the mature plant.

Functionally, plant non-specific lipid-transfer proteins transfer phospholipids as well as galactolipids across membranes. May play a role in wax or cutin deposition in the cell walls of expanding epidermal cells and certain secretory tissues. This chain is Non-specific lipid-transfer protein 3, found in Pisum sativum (Garden pea).